The primary structure comprises 359 residues: Type-1 angiotensin II receptor B (359 aa).

The Extracellular segment spans residues 1–25 (MILNSSIEDGIKRIQDDCPKAGRHN). A glycan (N-linked (GlcNAc...) asparagine) is linked at N4. Angiotensin II is bound by residues Q15 and D17. Intrachain disulfides connect C18/C274 and C101/C180. The helical transmembrane segment at 26-55 (YIFVMIPTLYSIIFVVGIFGNSLVVIVIYF) threads the bilayer. At 56–61 (YMKLKT) the chain is on the cytoplasmic side. A helical membrane pass occupies residues 62–89 (VASVFLLNLALADLCFLLTLPLWAVYTA). Over 90–98 (MEYQWPFGN) the chain is Extracellular. The chain crosses the membrane as a helical span at residues 99–125 (HLCKIASASVSFNLYASVFLLTCLSID). The Cytoplasmic portion of the chain corresponds to 126–141 (RYLAIVHPMKSRLRRT). A helical transmembrane segment spans residues 142 to 165 (MLVAKVTCIIIWLMAGLASLPAVI). Residues 166–190 (HRNVYFIENTNITVCAFHYESQNST) are Extracellular-facing. An angiotensin II-binding site is contributed by R167. N176 carries N-linked (GlcNAc...) asparagine glycosylation. Residues F182, H183, and Y184 each contribute to the angiotensin II site. A glycan (N-linked (GlcNAc...) asparagine) is linked at N188. The chain crosses the membrane as a helical span at residues 191–216 (LPIGLGLTKNILGFVFPFVIILTSYT). An angiotensin II-binding site is contributed by K199. At 217-239 (LIWKALKKAYKIQKNTPRNDDIF) the chain is on the cytoplasmic side. Residues 240–268 (RIIMAIVLFFFFSWVPHQIFSFLDVLIQL) traverse the membrane as a helical segment. Residues 269–278 (GVIHDCEIAD) are Extracellular-facing. A helical membrane pass occupies residues 279–304 (VVDTAMPITICIAYFNNCLNPLFYGF). Over 305–359 (LGKKFKRYFLQLLKYIPPKARSHAGLSTKMSTLSYRPSDNMSSSARKSAYCFEVE) the chain is Cytoplasmic. Residue C355 is the site of S-palmitoyl cysteine attachment.

This sequence belongs to the G-protein coupled receptor 1 family. In terms of assembly, interacts with MAS1. Interacts with ARRB1. Interacts with FLNA (via filamin repeat 21); increases PKA-mediated phosphorylation of FLNA. Post-translationally, C-terminal Ser or Thr residues may be phosphorylated.

Its subcellular location is the cell membrane. Its function is as follows. Receptor for angiotensin II, a vasoconstricting peptide, which acts as a key regulator of blood pressure and sodium retention by the kidney. The activated receptor in turn couples to G-alpha proteins G(q) (GNAQ, GNA11, GNA14 or GNA15) and thus activates phospholipase C and increases the cytosolic Ca(2+) concentrations, which in turn triggers cellular responses such as stimulation of protein kinase C. The protein is Type-1 angiotensin II receptor B (Agtr1b) of Mus musculus (Mouse).